A 406-amino-acid polypeptide reads, in one-letter code: Zinc finger protein CONSTANS-LIKE 6 (406 aa).

Zn(2+)-binding residues include cysteine 17, cysteine 20, cysteine 40, and histidine 45. The B box-type; atypical zinc-finger motif lies at 17 to 59 (CDSCVKRRARWYCAADDAFLCHACDGSVHSANPLARRHERVRL). Residues 63-95 (SAGKYRHASPPHQATWHQGFTRKARTPRGGKKS) are disordered. Positions 82–95 (FTRKARTPRGGKKS) are enriched in basic residues. Residues 357 to 399 (REARVSRYREKRRTRLFSKKIRYEVRKLNAEKRPRMKGRFVKR) enclose the CCT domain.

Belongs to the CONSTANS family.

It localises to the nucleus. The sequence is that of Zinc finger protein CONSTANS-LIKE 6 (COL6) from Arabidopsis thaliana (Mouse-ear cress).